A 102-amino-acid polypeptide reads, in one-letter code: Small ribosomal subunit protein uS10 (102 aa).

It belongs to the universal ribosomal protein uS10 family. As to quaternary structure, part of the 30S ribosomal subunit.

Involved in the binding of tRNA to the ribosomes. The sequence is that of Small ribosomal subunit protein uS10 from Lactococcus lactis subsp. lactis (strain IL1403) (Streptococcus lactis).